The primary structure comprises 174 residues: Large ribosomal subunit protein uL10 (174 aa).

This sequence belongs to the universal ribosomal protein uL10 family. As to quaternary structure, part of the ribosomal stalk of the 50S ribosomal subunit. The N-terminus interacts with L11 and the large rRNA to form the base of the stalk. The C-terminus forms an elongated spine to which L12 dimers bind in a sequential fashion forming a multimeric L10(L12)X complex.

Its function is as follows. Forms part of the ribosomal stalk, playing a central role in the interaction of the ribosome with GTP-bound translation factors. This Acidiphilium cryptum (strain JF-5) protein is Large ribosomal subunit protein uL10.